We begin with the raw amino-acid sequence, 499 residues long: Zinc finger protein PLAG1 (499 aa).

The tract at residues 1–33 is disordered; the sequence is MATVIPGDLSEVRDTQKAPSGKRKRGESKPRKN. Positions 2–84 are interaction with KPNA2; sequence ATVIPGDLSE…SKYKLQRHMA (83 aa). The short motif at 22–25 is the Nuclear localization signal element; sequence KRKR. C2H2-type zinc fingers lie at residues 34-56, 62-86, 92-114, 121-143, 150-172, 185-207, and 213-236; these read FPCQ…SFSH, YKCT…MATH, HKCN…LHTH, FKCE…LALH, LTCK…LKSH, HQCE…MVVH, and FLCQ…KKSH. The segment at 41–242 is decreased nuclear import with localization in the nucleus but also in the cytoplasm; sequence KAFNSVEKLK…KKSHNQELLK (202 aa). The tract at residues 243–383 is repression domain; contains 3 sumoylation motifs and massively decrease transcription activity; the sequence is VKTEPVDFLD…SQASSSKLGL (141 aa). The segment at 243-499 is activates transcription; Inhibition of nuclear import due to lack of NLS and KPNA2 interaction; sequence VKTEPVDFLD…TLPRFHQAFQ (257 aa). Glycyl lysine isopeptide (Lys-Gly) (interchain with G-Cter in SUMO) cross-links involve residues Lys244 and Lys263. The disordered stretch occupies residues 364 to 400; sequence QGGAPSSSQDSQASSSKLGLEPQSGSPDDGAGDLSLS. Residues 369–379 are compositionally biased toward low complexity; the sequence is SSSQDSQASSS. The massively activates transcription stretch occupies residues 384–499; the sequence is EPQSGSPDDG…TLPRFHQAFQ (116 aa).

The protein belongs to the krueppel C2H2-type zinc-finger protein family. In terms of assembly, interacts with KPNA2, which escorts protein to the nucleus via interaction with nuclear localization signal. Interacts with E3 SUMO-protein ligase PIAS1, PIAS2 and PIAS4. In terms of processing, sumoylated with SUMO1; which inhibits transcriptional activity, but does not affect nuclear localization. Blockers of sumoylation pathway such as SENP3 and inactive UBE2I increases transcriptional capacity. Sumoylation is increased in the presence of PIAS1. Post-translationally, acetylated by lysine acetyltransferase EP300; which activates transcriptional capacity. Lysine residues that are sumoylated also seem to be target for acetylation. In terms of tissue distribution, expressed in heart, spleen, lung, kidney, brain, testis and epididymis but not in salivary glands.

It localises to the nucleus. In terms of biological role, transcription factor whose activation results in up-regulation of target genes, such as IGFII, leading to uncontrolled cell proliferation: when overexpressed in cultured cells, higher proliferation rate and transformation are observed. Other target genes such as CRLF1, CRABP2, CRIP2, PIGF are strongly induced in cells with PLAG1 induction. Proto-oncogene whose ectopic expression can trigger the development of pleomorphic adenomas of the salivary gland and lipoblastomas. Cooperates with CBFB-MYH11. The sequence is that of Zinc finger protein PLAG1 (Plag1) from Rattus norvegicus (Rat).